The primary structure comprises 1247 residues: Leucine-rich repeat-containing protein 53 (1247 aa).

LRR repeat units follow at residues 34-55 (TTRV…NLSL), 58-79 (NLAL…ALHG), 82-102 (MLRT…TDHT), 108-129 (SLQV…WFRN), 132-153 (GLTR…SFGG), 158-179 (SLRY…AFRP), and 182-203 (QLQE…FTPL). The 58-residue stretch at 214–271 (NQWSCTCDLHPLARFLRNYIKSSAHTLRNAKDLNCQPSTAAVAAAQSVLRLSETNCDS) folds into the LRRCT domain. A helical membrane pass occupies residues 294–314 (LLTVLGFAGAVGLTCLGLVVF). 3 disordered regions span residues 828–866 (SAGH…EDAT), 887–927 (VLPF…SPRN), and 1223–1247 (ENSA…LETE). 2 stretches are compositionally biased toward polar residues: residues 898-927 (DQGT…SPRN) and 1238-1247 (YATTSPLETE).

It is found in the membrane. The polypeptide is Leucine-rich repeat-containing protein 53 (LRRC53) (Homo sapiens (Human)).